Here is a 167-residue protein sequence, read N- to C-terminus: Endoribonuclease YbeY (167 aa).

Zn(2+) contacts are provided by histidine 132, histidine 136, and histidine 142.

It belongs to the endoribonuclease YbeY family. It depends on Zn(2+) as a cofactor.

It localises to the cytoplasm. Functionally, single strand-specific metallo-endoribonuclease involved in late-stage 70S ribosome quality control and in maturation of the 3' terminus of the 16S rRNA. In Clostridium tetani (strain Massachusetts / E88), this protein is Endoribonuclease YbeY.